The following is a 333-amino-acid chain: Autoinducer 2 import system permease protein LsrD (333 aa).

The next 10 helical transmembrane spans lie at 7–27 (YGWE…FGIA), 45–65 (ICIG…GIDI), 70–90 (TIGL…PMAA), 91–111 (AIPL…ALIL), 119–139 (VITL…SGIF), 162–182 (LLGL…FWLF), 212–232 (TLYF…IVLV), 240–260 (SDLG…GGAN), 261–281 (IYGG…IGYL), and 288–308 (IGIP…IAVV).

This sequence belongs to the binding-protein-dependent transport system permease family. AraH/RbsC subfamily. As to quaternary structure, the complex is composed of two ATP-binding proteins (LsrA), two transmembrane proteins (LsrC and LsrD) and a solute-binding protein (LsrB).

The protein resides in the cell inner membrane. Part of the ABC transporter complex LsrABCD involved in autoinducer 2 (AI-2) import. Probably responsible for the translocation of the substrate across the membrane. The protein is Autoinducer 2 import system permease protein LsrD (lsrD) of Photorhabdus temperata.